The chain runs to 314 residues: Serine/threonine-protein phosphatase CPPED1 (314 aa).

S2 is modified (phosphoserine). The catalytic stretch occupies residues 47 to 250 (KAWSTGDCDN…KVVFSGHYHR (204 aa)). A divalent metal cation is bound by residues D53, D90, N127, and H247. Position 294 is a phosphoserine (S294).

This sequence belongs to the metallophosphoesterase superfamily. CPPED1 family. A divalent metal cation serves as cofactor. In terms of tissue distribution, expressed in subcutaneous adipose tissue.

The protein resides in the cytoplasm. It carries out the reaction O-phospho-L-seryl-[protein] + H2O = L-seryl-[protein] + phosphate. It catalyses the reaction O-phospho-L-threonyl-[protein] + H2O = L-threonyl-[protein] + phosphate. Protein phosphatase that dephosphorylates AKT family kinase specifically at 'Ser-473', blocking cell cycle progression and promoting cell apoptosis. May play an inhibitory role in glucose uptake by adipocytes. This chain is Serine/threonine-protein phosphatase CPPED1 (CPPED1), found in Homo sapiens (Human).